The chain runs to 159 residues: SsrA-binding protein (159 aa).

Positions 138-159 (KRDTLKDKDWQRQKERMMKHSV) are disordered.

It belongs to the SmpB family.

It is found in the cytoplasm. Required for rescue of stalled ribosomes mediated by trans-translation. Binds to transfer-messenger RNA (tmRNA), required for stable association of tmRNA with ribosomes. tmRNA and SmpB together mimic tRNA shape, replacing the anticodon stem-loop with SmpB. tmRNA is encoded by the ssrA gene; the 2 termini fold to resemble tRNA(Ala) and it encodes a 'tag peptide', a short internal open reading frame. During trans-translation Ala-aminoacylated tmRNA acts like a tRNA, entering the A-site of stalled ribosomes, displacing the stalled mRNA. The ribosome then switches to translate the ORF on the tmRNA; the nascent peptide is terminated with the 'tag peptide' encoded by the tmRNA and targeted for degradation. The ribosome is freed to recommence translation, which seems to be the essential function of trans-translation. This is SsrA-binding protein from Alteromonas mediterranea (strain DSM 17117 / CIP 110805 / LMG 28347 / Deep ecotype).